The chain runs to 85 residues: Major outer membrane protein 1 (85 aa).

An N-terminal signal peptide occupies residues 1–18 (MEAREVEEMRRSRLLTLG). A helical transmembrane segment spans residues 22–42 (YTAVIALAALVLVMGALGLVL).

As to quaternary structure, forms extremely stable complexes with apparent masses of 150, 50, 45 and 38 kDa. Found in a ring-shaped complex of 7 nm diameter with a 2 nm channel through the middle. Complete denaturation requires temperatures over 110 degrees Celsius.

Its subcellular location is the cell outer membrane. Functionally, the most abundant protein of the outer membrane, it forms a pore through it. The chain is Major outer membrane protein 1 (ihomp1) from Ignicoccus hospitalis (strain KIN4/I / DSM 18386 / JCM 14125).